The chain runs to 155 residues: MRPRITVVAPSRIKPLEIPEFTTIWQFKDIDISHFLDLARGQCRADKVVEALSNGVKSPTVYVLDCDGYYPGLNFVFGLAVPVLKTAVVFTARLVGPRFEERLVKEITHEAGHLYGLAHCANPSCVMYFSNSLLDTDRKSPYFCPKCRENLARIL.

Residue histidine 109 participates in Zn(2+) binding. Glutamate 110 functions as the Proton acceptor in the catalytic mechanism. The Zn(2+) site is built by histidine 113, histidine 119, cysteine 120, cysteine 125, cysteine 144, and cysteine 147.

This sequence belongs to the peptidase M54 family. As to quaternary structure, monomer. Zn(2+) serves as cofactor.

Functionally, probable zinc metalloprotease whose natural substrate is unknown. The chain is Archaemetzincin from Pyrobaculum aerophilum (strain ATCC 51768 / DSM 7523 / JCM 9630 / CIP 104966 / NBRC 100827 / IM2).